Reading from the N-terminus, the 249-residue chain is Uridylate kinase (249 aa).

Residue 16–19 (KLSG) coordinates ATP. Glycine 57 is a binding site for UMP. Residues glycine 58 and arginine 62 each coordinate ATP. UMP-binding positions include aspartate 77 and 138–145 (AGMPYFST). Positions 166, 172, and 175 each coordinate ATP.

Belongs to the UMP kinase family. In terms of assembly, homohexamer.

The protein resides in the cytoplasm. It catalyses the reaction UMP + ATP = UDP + ADP. The protein operates within pyrimidine metabolism; CTP biosynthesis via de novo pathway; UDP from UMP (UMPK route): step 1/1. Its activity is regulated as follows. Inhibited by UTP. In terms of biological role, catalyzes the reversible phosphorylation of UMP to UDP. This chain is Uridylate kinase, found in Bifidobacterium adolescentis (strain ATCC 15703 / DSM 20083 / NCTC 11814 / E194a).